Reading from the N-terminus, the 479-residue chain is mRNA export factor ICP27 homolog (479 aa).

Over residues 1 to 15 (MVPSQRLSRTSSISS) the composition is skewed to low complexity. Disordered regions lie at residues 1-78 (MVPS…SSVV) and 92-210 (KWDL…NKPW). The segment covering 35–44 (TDCDMDPMEG) has biased composition (acidic residues). Residues 132-142 (EVHGCTDESYG) are compositionally biased toward basic and acidic residues. Zn(2+)-binding residues include Cys-354, His-445, Cys-449, and Cys-454. The CHC2-type zinc-finger motif lies at 354–454 (CFLPNTRDYN…HTRDCRSASC (101 aa)).

The protein belongs to the HHV-1 ICP27 protein family. In terms of assembly, interacts with host XPO1 and with the XPO1 export pathway components small GTPase RAN and nucleoporin NUP214. Interacts with host SPEN, OTT1 and OTT3. Interacts with host SRSF1, SRSF3, SRSF7 and SRPK1. Interacts with host DHX9; this interaction may have an inhibitory effect on virion production. Interacts (via N-terminus) with host NXF1; this interaction plays a role in mRNA export. In terms of processing, phosphorylated by cellular protein kinase CK2.

Its subcellular location is the host nucleus. It localises to the host cytoplasm. Promotes the nuclear export of a subset of early and late viral mRNAs by interacting with mRNAs and cellular export proteins. Additionally may prevent the establishment of cellular antiviral state, by acting as an alternative splicing factor for cellular RNAs such as STAT1, resulting in a STAT1 mRNA incapable of producing the STAT1alpha isoform. In Homo sapiens (Human), this protein is mRNA export factor ICP27 homolog.